Reading from the N-terminus, the 247-residue chain is Virulence plasmid protein pGP6-D (247 aa).

This sequence belongs to the UPF0137 (pGP6-D) family.

This is Virulence plasmid protein pGP6-D from Chlamydia trachomatis.